A 155-amino-acid chain; its full sequence is MRMVIAAVGRLRQGPEAKLIADYLDRHAKAGRALGLPPVTLAEVEDKRGGGMVAEAALLARAIPQGAALVVLDERGQMLSSPEFAARIAGWRDQARDVAFVIGGADGIDPGLRDGADLAISFGRMVWPHMLVRVMLAEQIYRATTILAGNPYHRE.

Residues Leu-72, Gly-103, and 122–127 (FGRMVW) contribute to the S-adenosyl-L-methionine site.

This sequence belongs to the RNA methyltransferase RlmH family. As to quaternary structure, homodimer.

It localises to the cytoplasm. It catalyses the reaction pseudouridine(1915) in 23S rRNA + S-adenosyl-L-methionine = N(3)-methylpseudouridine(1915) in 23S rRNA + S-adenosyl-L-homocysteine + H(+). In terms of biological role, specifically methylates the pseudouridine at position 1915 (m3Psi1915) in 23S rRNA. The chain is Ribosomal RNA large subunit methyltransferase H from Paracoccus denitrificans (strain Pd 1222).